The sequence spans 249 residues: MSVQREDVDIKLIAIDMDGTLLNDEQLISDENRKAIREAEDKGVYVVISTGRTLMTCRELAESLKLSSFLITANGSEIWDSNFNLVERKLLHTDHIQMMWDLRNKHNTNFWASTVNKVWRGEFPENITDHEWLKFGFDIEDDDIRNEVLEELRKNKELEITNSSPTNIEVNALGINKAAALAKVTEKLGFTMENVMAMGDSLNDIAMIKEAGLGVAMGNAQDIVKETADYITDTNIEDGVAKAIRHWVL.

The active-site Nucleophile is the D16. D16 provides a ligand contact to Mg(2+). M17 contacts phosphate. Position 18 (D18) interacts with Mg(2+). Phosphate-binding positions include 50–51 (TG) and K177. Mg(2+) contacts are provided by D200 and S201. Phosphate is bound at residue N203.

It belongs to the HAD-like hydrolase superfamily. Cof family. Mg(2+) serves as cofactor.

It carries out the reaction 5-amino-6-(5-phospho-D-ribitylamino)uracil + H2O = 5-amino-6-(D-ribitylamino)uracil + phosphate. It participates in cofactor biosynthesis; riboflavin biosynthesis; 5-amino-6-(D-ribitylamino)uracil from GTP: step 4/4. Catalyzes the dephosphorylation of the riboflavin precursor 5-amino-6-(5-phospho-D-ribitylamino)uracil and of flavin mononucleotide (FMN) in vitro. To a lesser extent, may also catalyze the dephosphorylation of a broad range of substrates such as phosphorylated sugars and triphosphate nucleotides in vitro. This is 5-amino-6-(5-phospho-D-ribitylamino)uracil phosphatase YcsE (ycsE) from Bacillus subtilis (strain 168).